Consider the following 379-residue polypeptide: S-(hydroxymethyl)glutathione dehydrogenase (379 aa).

C47 contributes to the Zn(2+) binding site. Position 48 (H48) interacts with NAD(+). The Zn(2+) site is built by H69, E70, C99, C102, C105, C113, and C176. NAD(+) is bound by residues 201-206 (GAGCIG), D225, and 296-298 (IGV).

It belongs to the zinc-containing alcohol dehydrogenase family. Class-III subfamily. Zn(2+) serves as cofactor.

It catalyses the reaction a primary alcohol + NAD(+) = an aldehyde + NADH + H(+). The enzyme catalyses a secondary alcohol + NAD(+) = a ketone + NADH + H(+). It carries out the reaction S-(hydroxymethyl)glutathione + NADP(+) = S-formylglutathione + NADPH + H(+). The catalysed reaction is S-(hydroxymethyl)glutathione + NAD(+) = S-formylglutathione + NADH + H(+). It catalyses the reaction S-nitrosoglutathione + NADH + H(+) = S-(hydroxysulfenamide)glutathione + NAD(+). Oxidizes long-chain alcohols and, in the presence of glutathione, is able to oxidize formaldehyde. Also acts as a S-nitroso-glutathione reductase by catalyzing the NADH-dependent reduction of S-nitrosoglutathione, thereby regulating protein S-nitrosylation. This is S-(hydroxymethyl)glutathione dehydrogenase (FLD1) from Komagataella pastoris (Yeast).